A 313-amino-acid polypeptide reads, in one-letter code: Beta-lactamase FAR-1 (313 aa).

A signal peptide spans 1–28; it reads MPGVDISFLKKSGRRTMAAAAVIALLGG. C29 carries the N-palmitoyl cysteine lipid modification. C29 is lipidated: S-diacylglycerol cysteine. Catalysis depends on S94, which acts as the Acyl-ester intermediate. S154 lines the substrate pocket. E190 functions as the Proton acceptor in the catalytic mechanism. Substrate is bound at residue 258–260; the sequence is KTG.

This sequence belongs to the class-A beta-lactamase family.

The protein localises to the cell membrane. The catalysed reaction is a beta-lactam + H2O = a substituted beta-amino acid. Its activity is regulated as follows. Inhibited by clavulanic acid, and at a low level by tazobactam and sulbactam. Its function is as follows. Confers high levels of resistance to amoxicillin, benzylpenicillin, piperacillin, ticarcillin and cephalothin. Also hydrolyzes aztreonam at a low level. Not active against ceftazidime, cefotaxime and imipenem. This is Beta-lactamase FAR-1 (bla) from Nocardia farcinica (strain IFM 10152).